A 256-amino-acid chain; its full sequence is Probable enoyl-CoA hydratase echA14 (256 aa).

The disordered stretch occupies residues 235–256 (GPQAKSVQSPEFAARLAAAQHR).

This sequence belongs to the enoyl-CoA hydratase/isomerase family.

It carries out the reaction a (3S)-3-hydroxyacyl-CoA = a (2E)-enoyl-CoA + H2O. It catalyses the reaction a 4-saturated-(3S)-3-hydroxyacyl-CoA = a (3E)-enoyl-CoA + H2O. Its function is as follows. Could possibly oxidize fatty acids using specific components. In Mycobacterium tuberculosis (strain CDC 1551 / Oshkosh), this protein is Probable enoyl-CoA hydratase echA14 (echA14).